The following is a 799-amino-acid chain: Ribosome biogenesis protein BOP1 homolog (799 aa).

The disordered stretch occupies residues 1 to 171; the sequence is MPRRVRAQKR…DDTSDEEHSL (171 aa). Positions 58-69 are enriched in acidic residues; the sequence is SESDVTDDEQID. Residues 70–81 are compositionally biased toward basic and acidic residues; that stretch reads EEARQADRDLLK. A compositionally biased stretch (acidic residues) spans 93–121; that stretch reads DPSDADNDDDDDEEEAASDDDDEEEDAEP. Over residues 122 to 132 the composition is skewed to low complexity; that stretch reads SSDSSNEASDA. 7 WD repeats span residues 457 to 498, 500 to 538, 584 to 626, 629 to 669, 670 to 709, 713 to 752, and 769 to 799; these read GHKA…RVVT, DAEV…AAID, PHHA…TQHP, KRNR…KKLL, TGVR…KPYK, YHKY…DLGQ, and SDGM…KLHV.

The protein belongs to the WD repeat BOP1/ERB1 family.

Its subcellular location is the nucleus. It localises to the nucleolus. The protein resides in the nucleoplasm. In terms of biological role, required for maturation of ribosomal RNAs and formation of the large ribosomal subunit. This is Ribosome biogenesis protein BOP1 homolog from Monosiga brevicollis (Choanoflagellate).